The chain runs to 192 residues: Rhomboid protease GlpG (192 aa).

Topologically, residues Met1 to Lys10 are cytoplasmic. A helical transmembrane segment spans residues Ile11–Glu31. Residues Asp32–Thr57 are Periplasmic-facing. Residues Leu58–Gly78 form a helical membrane-spanning segment. Topologically, residues Met79–Arg82 are cytoplasmic. Residues Thr83–Val103 form a helical membrane-spanning segment. At Gln104–Val107 the chain is on the periplasmic side. A helical membrane pass occupies residues Ser108–Ile128. The active-site Nucleophile is Ser116. At Arg129–Glu141 the chain is on the cytoplasmic side. The chain crosses the membrane as a helical span at residues Gly142–Val162. A topological domain (periplasmic) is located at residue Glu163. Residues Met164–Ser184 form a helical membrane-spanning segment. Residue His169 is part of the active site. Over Lys185–Glu192 the chain is Cytoplasmic.

The protein belongs to the peptidase S54 family.

It localises to the cell inner membrane. It carries out the reaction Cleaves type-1 transmembrane domains using a catalytic dyad composed of serine and histidine that are contributed by different transmembrane domains.. Its function is as follows. Rhomboid-type serine protease that catalyzes intramembrane proteolysis. This is Rhomboid protease GlpG (glpG) from Haemophilus influenzae (strain ATCC 51907 / DSM 11121 / KW20 / Rd).